We begin with the raw amino-acid sequence, 125 residues long: Conopressin-conophysin, isoform 1 (125 aa).

Residues 1–22 (MQMGRPTLLPCLLLLLVLSTQA) form the signal peptide. A disulfide bond links cysteine 23 and cysteine 28. The residue at position 31 (glycine 31) is a Glycine amide. Residues 32 to 39 (GKRDVHMI) constitute a propeptide that is removed on maturation. Cystine bridges form between cysteine 45–cysteine 85, cysteine 48–cysteine 59, cysteine 53–cysteine 75, cysteine 60–cysteine 65, cysteine 92–cysteine 112, cysteine 104–cysteine 124, and cysteine 113–cysteine 118.

Belongs to the vasopressin/oxytocin family. As to expression, expressed by the venom gland.

The protein resides in the secreted. Functionally, targets vasopressin-oxytocin related receptors. The chain is Conopressin-conophysin, isoform 1 from Conus monile (Necklace cone).